A 118-amino-acid polypeptide reads, in one-letter code: Large ribosomal subunit protein uL18 (118 aa).

The protein belongs to the universal ribosomal protein uL18 family. As to quaternary structure, part of the 50S ribosomal subunit; part of the 5S rRNA/L5/L18/L25 subcomplex. Contacts the 5S and 23S rRNAs.

This is one of the proteins that bind and probably mediate the attachment of the 5S RNA into the large ribosomal subunit, where it forms part of the central protuberance. The protein is Large ribosomal subunit protein uL18 of Caulobacter sp. (strain K31).